A 383-amino-acid chain; its full sequence is Protein salvador homolog 1 (383 aa).

Phosphoserine is present on residues serine 94 and serine 136. 2 WW domains span residues 199–232 and 234–267; these read LPLPPGWSVDWTMRGRKYYIDHNTNTTHWSHPLE and EGLPPGWERVESSEFGTYYVDHTNKKAQYRHPCA. A Phosphothreonine modification is found at threonine 210. An SARAH domain is found at 321–368; that stretch reads ILKWELFQLADLDTYQGMLKLLFMKELEQIVKMYEAYRQALLTELENR. Residues 344-373 are a coiled coil; it reads MKELEQIVKMYEAYRQALLTELENRKQRQQ.

Homodimer. Stabilized through interaction with STK3/MST2 or STK4/MST1. Interacts (via SARAH domain) with isoform 1 of NEK2. Interacts with ESR1 only in the presence of STK3/MST2. Interacts with WTIP and AJUBA. Post-translationally, phosphorylated by STK3/MST2 and STK4/MST1. Phosphorylation is not required for SAV1 stability and may increase the number of protein binding sites on the scaffold molecule. Ubiquitously expressed in adult tissues with highest expression in the pancreas, aorta and interventricular septum and lowest expression in skeletal muscle. Expression was higher in fetal than in the adult heart. Expressed in various cell lines.

The protein localises to the nucleus. It is found in the cytoplasm. Functionally, regulator of STK3/MST2 and STK4/MST1 in the Hippo signaling pathway which plays a pivotal role in organ size control and tumor suppression by restricting proliferation and promoting apoptosis. The core of this pathway is composed of a kinase cascade wherein STK3/MST2 and STK4/MST1, in complex with its regulatory protein SAV1, phosphorylates and activates LATS1/2 in complex with its regulatory protein MOB1, which in turn phosphorylates and inactivates YAP1 oncoprotein and WWTR1/TAZ. Phosphorylation of YAP1 by LATS1/2 inhibits its translocation into the nucleus to regulate cellular genes important for cell proliferation, cell death, and cell migration. SAV1 is required for STK3/MST2 and STK4/MST1 activation and promotes cell-cycle exit and terminal differentiation in developing epithelial tissues. Plays a role in centrosome disjunction by regulating the localization of NEK2 to centrosomes, and its ability to phosphorylate CROCC and CEP250. In conjunction with STK3/MST2, activates the transcriptional activity of ESR1 through the modulation of its phosphorylation. This chain is Protein salvador homolog 1, found in Homo sapiens (Human).